The primary structure comprises 479 residues: Phosphatidylinositol 4-kinase type 2-beta (479 aa).

Residues 1–10 (MESGSEEPDE) show a composition bias toward acidic residues. The interval 1 to 91 (MESGSEEPDE…PRVGAGHTGH (91 aa)) is disordered. The segment covering 18–34 (PALHAGPPAGRAAPGGA) has biased composition (low complexity). Positions 42 to 62 (GLEEEEEGEEDSGPEGDGEEE) are enriched in acidic residues. In terms of domain architecture, PI3K/PI4K catalytic spans 118–449 (GVLPERISQG…VQMPRVIVER (332 aa)). A G-loop region spans residues 124–130 (ISQGSSG). Residues Ser131 and Lys146 each coordinate ATP. An important for substrate binding region spans residues 151 to 153 (EPY). Residues 159 to 172 (KWTKYFHKICCPCC) form an important for interaction with membranes region. ATP-binding positions include 255–258 (QLFV) and 269–270 (RK). An important for interaction with membranes region spans residues 262 to 270 (KEADYWLRK). The tract at residues 299–307 (RNTDRGNDN) is catalytic loop. The interval 340–360 (AIDNGLAFPFKHPDEWRAYPF) is activation loop. Asp342 lines the ATP pocket. Residues 355–364 (WRAYPFHWAW) are important for interaction with membranes.

This sequence belongs to the PI3/PI4-kinase family. Type II PI4K subfamily.

It localises to the cytoplasm. Its subcellular location is the cytosol. The protein resides in the golgi apparatus membrane. It is found in the endoplasmic reticulum membrane. The protein localises to the cell membrane. It localises to the early endosome membrane. It carries out the reaction a 1,2-diacyl-sn-glycero-3-phospho-(1D-myo-inositol) + ATP = a 1,2-diacyl-sn-glycero-3-phospho-(1D-myo-inositol 4-phosphate) + ADP + H(+). Functionally, contributes to the overall PI4-kinase activity of the cell. This contribution may be especially significant in plasma membrane, endosomal and Golgi compartments. The phosphorylation of phosphatidylinositol (PI) to PI4P is the first committed step in the generation of phosphatidylinositol 4,5-bisphosphate (PIP2), a precursor of the second messenger inositol 1,4,5-trisphosphate (InsP3). In Gallus gallus (Chicken), this protein is Phosphatidylinositol 4-kinase type 2-beta (PI4K2B).